A 165-amino-acid polypeptide reads, in one-letter code: LOB domain-containing protein 21 (165 aa).

Residues 10–111 form the LOB domain; it reads SSCAACKLLK…HDLAVARTRL (102 aa).

It belongs to the LOB domain-containing protein family.

This chain is LOB domain-containing protein 21 (LBD21), found in Arabidopsis thaliana (Mouse-ear cress).